The following is a 203-amino-acid chain: Synaptosomal-associated protein 25-B (203 aa).

The span at Met-1–Leu-11 shows a compositional bias: basic and acidic residues. The interval Met-1–Ser-25 is disordered. 2 t-SNARE coiled-coil homology domains span residues Asp-19–Leu-81 and Asp-137–Met-199.

The protein belongs to the SNAP-25 family.

It is found in the synapse. The protein localises to the synaptosome. Its subcellular location is the cell membrane. Its function is as follows. May play an important role in the synaptic function of specific neuronal systems. Associates with proteins involved in vesicle docking and membrane fusion. The protein is Synaptosomal-associated protein 25-B (snap25b) of Carassius auratus (Goldfish).